The chain runs to 331 residues: DNA fragmentation factor subunit alpha (331 aa).

Met-1 bears the N-acetylmethionine mark. The region spanning 17–96 (PLKPCLLRRN…ALACNEKWIY (80 aa)) is the CIDE-N domain. Thr-243 is modified (phosphothreonine). The tract at residues 306 to 331 (LRNLSARRSPLPGEPQRPKRAKRDSS) is disordered.

As to quaternary structure, heterodimer of DFFA and DFFB. In terms of processing, caspase-3 cleaves DFF45 at 2 sites to generate an active factor.

It is found in the cytoplasm. Its function is as follows. Inhibitor of the caspase-activated DNase (DFF40). This is DNA fragmentation factor subunit alpha (Dffa) from Mus musculus (Mouse).